We begin with the raw amino-acid sequence, 77 residues long: DNA-directed RNA polymerase subunit Rpo5 (77 aa).

The protein belongs to the archaeal Rpo5/eukaryotic RPB5 RNA polymerase subunit family. Part of the RNA polymerase complex.

The protein localises to the cytoplasm. It carries out the reaction RNA(n) + a ribonucleoside 5'-triphosphate = RNA(n+1) + diphosphate. In terms of biological role, DNA-dependent RNA polymerase (RNAP) catalyzes the transcription of DNA into RNA using the four ribonucleoside triphosphates as substrates. This chain is DNA-directed RNA polymerase subunit Rpo5, found in Methanothermobacter thermautotrophicus (strain ATCC 29096 / DSM 1053 / JCM 10044 / NBRC 100330 / Delta H) (Methanobacterium thermoautotrophicum).